We begin with the raw amino-acid sequence, 366 residues long: Peptide chain release factor 2 (366 aa).

Position 253 is an N5-methylglutamine (glutamine 253).

The protein belongs to the prokaryotic/mitochondrial release factor family. In terms of processing, methylated by PrmC. Methylation increases the termination efficiency of RF2.

It is found in the cytoplasm. Functionally, peptide chain release factor 2 directs the termination of translation in response to the peptide chain termination codons UGA and UAA. The chain is Peptide chain release factor 2 from Yersinia pestis.